The following is a 390-amino-acid chain: Phosphopentomutase (390 aa).

Mn(2+)-binding residues include Asp12, Asp285, His290, Asp326, His327, and His338.

The protein belongs to the phosphopentomutase family. The cofactor is Mn(2+).

Its subcellular location is the cytoplasm. It catalyses the reaction 2-deoxy-alpha-D-ribose 1-phosphate = 2-deoxy-D-ribose 5-phosphate. The catalysed reaction is alpha-D-ribose 1-phosphate = D-ribose 5-phosphate. The protein operates within carbohydrate degradation; 2-deoxy-D-ribose 1-phosphate degradation; D-glyceraldehyde 3-phosphate and acetaldehyde from 2-deoxy-alpha-D-ribose 1-phosphate: step 1/2. In terms of biological role, isomerase that catalyzes the conversion of deoxy-ribose 1-phosphate (dRib-1-P) and ribose 1-phosphate (Rib-1-P) to deoxy-ribose 5-phosphate (dRib-5-P) and ribose 5-phosphate (Rib-5-P), respectively. The sequence is that of Phosphopentomutase from Brevibacillus brevis (strain 47 / JCM 6285 / NBRC 100599).